The following is a 128-amino-acid chain: Thor profilin (128 aa).

This sequence belongs to the Asgard profilin family.

The protein localises to the cytoplasm. Its subcellular location is the cytoskeleton. Has no profilin activity against rabbit actin. In Thorarchaeota archaeon (strain AB_25), this protein is Thor profilin.